The sequence spans 122 residues: Large ribosomal subunit protein uL14c (122 aa).

Belongs to the universal ribosomal protein uL14 family. As to quaternary structure, part of the 50S ribosomal subunit.

The protein resides in the plastid. The protein localises to the chloroplast. Functionally, binds to 23S rRNA. The sequence is that of Large ribosomal subunit protein uL14c from Dioscorea elephantipes (Elephant's foot yam).